The sequence spans 77 residues: Large ribosomal subunit protein bL31 (77 aa).

The protein belongs to the bacterial ribosomal protein bL31 family. Type A subfamily. Part of the 50S ribosomal subunit.

In terms of biological role, binds the 23S rRNA. The polypeptide is Large ribosomal subunit protein bL31 (Microcystis aeruginosa (strain NIES-843 / IAM M-2473)).